Consider the following 819-residue polypeptide: Probable beta-glucosidase G (819 aa).

The first 20 residues, 1–20 (MTSASQILVWGLLAASGAQA), serve as a signal peptide directing secretion. Residues N41, N59, N107, N228, and N277 are each glycosylated (N-linked (GlcNAc...) asparagine). D305 is an active-site residue. 12 N-linked (GlcNAc...) asparagine glycosylation sites follow: N337, N344, N351, N403, N500, N509, N554, N567, N588, N627, N683, and N719.

This sequence belongs to the glycosyl hydrolase 3 family.

It is found in the secreted. It carries out the reaction Hydrolysis of terminal, non-reducing beta-D-glucosyl residues with release of beta-D-glucose.. It participates in glycan metabolism; cellulose degradation. In terms of biological role, beta-glucosidases are one of a number of cellulolytic enzymes involved in the degradation of cellulosic biomass. Catalyzes the last step releasing glucose from the inhibitory cellobiose. In Emericella nidulans (strain FGSC A4 / ATCC 38163 / CBS 112.46 / NRRL 194 / M139) (Aspergillus nidulans), this protein is Probable beta-glucosidase G (bglG).